The following is a 553-amino-acid chain: MDEVDKIIMHQLHQVDAAIEPTEELSGFTPEQVVRAVSGCLAEISPDLQLPRTLPGGAMAQRFGVASSLAQGCKDSGYRGDIGYQTFLYPNAVELRRLLMFLIEQLPRERQSAEDGASKSQTLSHRQLLERKIRKELAQQLKTPWVPQFARSVGNRKLLGCSSLGIEFRPNINLNIPSANPEERSKEQQQYLDQQAPNLFQQTASSSADLIASVLHKNELDRWDQTLSDSTLLFVDSEEPAPPPISTVKPDASAEEEASPIQELSDQVEELRVQCETLLAERKAHAVAIAALKQRETKASEEISRIQPTLKLHERTSLVLADSEENLTKLEALLKSTQSKRITLTQQWQDYRKPLLESLEKLKTAKEAQEVQGIRNNIEQLEQELLAKTQQHNELNATLRNASQSLAPRKEYTRRIHEFIGNIRKQRADIYKVLDDTRQLQKQLNVVGAQLQRQFNYTDDLLFQSAKHDLHAKRAYKLLAQLHANCNELVECVSLTGNVTKQIRELEVQIDGEKLKNVLTSLQQITGDIQKFEQHIQELQEQIRTVEQPNAGS.

The segment at 236 to 264 is disordered; that stretch reads DSEEPAPPPISTVKPDASAEEEASPIQEL. Coiled-coil stretches lie at residues 261–286, 314–407, and 498–549; these read IQEL…KAHA, ERTS…QSLA, and NVTK…VEQP.

It belongs to the CCDC22 family.

The protein is Coiled-coil domain-containing protein 22 homolog of Drosophila erecta (Fruit fly).